Consider the following 288-residue polypeptide: Homoserine kinase (288 aa).

79–89 (PPARGLGSSSA) is a binding site for ATP.

It belongs to the GHMP kinase family. Homoserine kinase subfamily.

It localises to the cytoplasm. The catalysed reaction is L-homoserine + ATP = O-phospho-L-homoserine + ADP + H(+). It participates in amino-acid biosynthesis; L-threonine biosynthesis; L-threonine from L-aspartate: step 4/5. Functionally, catalyzes the ATP-dependent phosphorylation of L-homoserine to L-homoserine phosphate. This Listeria monocytogenes serotype 4b (strain CLIP80459) protein is Homoserine kinase.